Here is a 556-residue protein sequence, read N- to C-terminus: ATP synthase subunit alpha 2 (556 aa).

Gly177–Thr184 provides a ligand contact to ATP. The interval Gly514 to Arg556 is disordered. The span at Gly546–Arg556 shows a compositional bias: low complexity.

Belongs to the ATPase alpha/beta chains family. In terms of assembly, F-type ATPases have 2 components, CF(1) - the catalytic core - and CF(0) - the membrane proton channel. CF(1) has five subunits: alpha(3), beta(3), gamma(1), delta(1), epsilon(1). CF(0) has three main subunits: a(1), b(2) and c(9-12). The alpha and beta chains form an alternating ring which encloses part of the gamma chain. CF(1) is attached to CF(0) by a central stalk formed by the gamma and epsilon chains, while a peripheral stalk is formed by the delta and b chains.

It localises to the cell inner membrane. The enzyme catalyses ATP + H2O + 4 H(+)(in) = ADP + phosphate + 5 H(+)(out). Its function is as follows. Produces ATP from ADP in the presence of a proton gradient across the membrane. The alpha chain is a regulatory subunit. The polypeptide is ATP synthase subunit alpha 2 (Burkholderia thailandensis (strain ATCC 700388 / DSM 13276 / CCUG 48851 / CIP 106301 / E264)).